A 739-amino-acid chain; its full sequence is UPF0313 protein YgiQ (739 aa).

The Radical SAM core domain maps to 372–650; the sequence is AYEMIRFSVN…KALLRYHDPA (279 aa). Residues Cys-386, Cys-390, and Cys-393 each contribute to the [4Fe-4S] cluster site. The tract at residues 685-739 is disordered; sequence REARRQNRNTRPALTKHTPMATQRQTPATAKKASSTQSRPVNAGAKKRPKAAVGR. Positions 704–724 are enriched in polar residues; the sequence is MATQRQTPATAKKASSTQSRP. Residues 729–739 are compositionally biased toward basic residues; it reads AKKRPKAAVGR.

The protein belongs to the UPF0313 family. The cofactor is [4Fe-4S] cluster.

The sequence is that of UPF0313 protein YgiQ from Shigella flexneri.